The chain runs to 44 residues: Small, acid-soluble spore protein P (44 aa).

The tract at residues 1–44 (MSHTMGKNNREAKEKKGQPEPLSGSHKVKNRNHSRQKHHAHHDM) is disordered. Residues 8-18 (NNREAKEKKGQ) show a composition bias toward basic and acidic residues. Residues 26–44 (HKVKNRNHSRQKHHAHHDM) show a composition bias toward basic residues.

The protein belongs to the SspP family.

It is found in the spore core. This Bacillus cereus (strain ATCC 14579 / DSM 31 / CCUG 7414 / JCM 2152 / NBRC 15305 / NCIMB 9373 / NCTC 2599 / NRRL B-3711) protein is Small, acid-soluble spore protein P.